The following is a 501-amino-acid chain: COP9 signalosome complex subunit 3 (501 aa).

Positions 275–445 (RFEDALFLLE…VFWTELSPVP (171 aa)) constitute a PCI domain.

It belongs to the CSN3 family. Component of the CSN complex, probably composed of csn-1, csn-2, csn-3, csn-4, csn-5, csn-6 and csn-7. Within the complex it probably interacts directly with csn-2 and csn-4. May interact with itself.

The protein resides in the cytoplasm. Its subcellular location is the nucleus. Its function is as follows. Component of the COP9 signalosome complex (CSN), a complex involved in various cellular and developmental processes. The CSN complex is an essential regulator of the ubiquitin (Ubl) conjugation pathway by mediating the deneddylation of the cullin subunits of the SCF-type E3 ligase complexes, leading to decrease the Ubl ligase activity of SCF. The CSN complex plays an essential role in embryogenesis and oogenesis and is required to regulate microtubule stability in the early embryo. Mediates mei-3/katanin targeting for degradation at the meiosis to mitosis transition via deneddylation of cul-3. This is COP9 signalosome complex subunit 3 (csn-3) from Caenorhabditis elegans.